The chain runs to 469 residues: Ribulose bisphosphate carboxylase large chain (469 aa).

Lys8 bears the N6,N6,N6-trimethyllysine mark. Substrate is bound by residues Asn117 and Thr167. Catalysis depends on Lys169, which acts as the Proton acceptor. Lys171 is a substrate binding site. Residues Lys195, Asp197, and Glu198 each contribute to the Mg(2+) site. Residue Lys195 is modified to N6-carboxylysine. The Proton acceptor role is filled by His288. Residues Arg289, His321, and Ser373 each coordinate substrate.

Belongs to the RuBisCO large chain family. Type I subfamily. As to quaternary structure, heterohexadecamer of 8 large chains and 8 small chains; disulfide-linked. The disulfide link is formed within the large subunit homodimers. It depends on Mg(2+) as a cofactor. Post-translationally, the disulfide bond which can form in the large chain dimeric partners within the hexadecamer appears to be associated with oxidative stress and protein turnover.

Its subcellular location is the plastid. The protein localises to the chloroplast. It carries out the reaction 2 (2R)-3-phosphoglycerate + 2 H(+) = D-ribulose 1,5-bisphosphate + CO2 + H2O. The enzyme catalyses D-ribulose 1,5-bisphosphate + O2 = 2-phosphoglycolate + (2R)-3-phosphoglycerate + 2 H(+). RuBisCO catalyzes two reactions: the carboxylation of D-ribulose 1,5-bisphosphate, the primary event in carbon dioxide fixation, as well as the oxidative fragmentation of the pentose substrate in the photorespiration process. Both reactions occur simultaneously and in competition at the same active site. This chain is Ribulose bisphosphate carboxylase large chain, found in Persicaria senticosa (Knotweed).